A 476-amino-acid polypeptide reads, in one-letter code: MDFEAVIGLEVHAELSTNTKIYCGCTTEFGGQPNTHVCPICLGLPGSLPQLNKRVVEYGIKAGLALNCSINKVCRMDRKNYFYPDCPKNYQITQDEVPICRDGYIEIELENGEKKKIGIERIHMEEDAGKLLHTNAGTLVDYNRAGVPLIEIVSRPDIRTPEEATKYLEKLKSILSSIEVSDCKMEQGSLRCDGNISVRPVGSEKFGVRSEIKNMNSFKALEKALSYEYDRHVEAVTKGEILEQETRRWDEANSVTVLMRSKEKANDYRYFPEGDLVTLNISDEWIEEVRKTIPELPHEKAERFVNEFGIPKYDAMVLTLTMDMAKFFEETAVKSEDAKAASNWLMGDISRLMNEKTIEVKDLKFNPEQLAQLIKLINARTISNNIGKKVLDDMFKSGKNPKDIVEEKGLVQNNDEGAILEVVKKIIENNPQSIEDFKNGKKRALGFLVGLVMKETKGKANPQIVNKLVSEEANKM.

Belongs to the GatB/GatE family. GatB subfamily. In terms of assembly, heterotrimer of A, B and C subunits.

The enzyme catalyses L-glutamyl-tRNA(Gln) + L-glutamine + ATP + H2O = L-glutaminyl-tRNA(Gln) + L-glutamate + ADP + phosphate + H(+). The catalysed reaction is L-aspartyl-tRNA(Asn) + L-glutamine + ATP + H2O = L-asparaginyl-tRNA(Asn) + L-glutamate + ADP + phosphate + 2 H(+). In terms of biological role, allows the formation of correctly charged Asn-tRNA(Asn) or Gln-tRNA(Gln) through the transamidation of misacylated Asp-tRNA(Asn) or Glu-tRNA(Gln) in organisms which lack either or both of asparaginyl-tRNA or glutaminyl-tRNA synthetases. The reaction takes place in the presence of glutamine and ATP through an activated phospho-Asp-tRNA(Asn) or phospho-Glu-tRNA(Gln). This is Aspartyl/glutamyl-tRNA(Asn/Gln) amidotransferase subunit B from Clostridium botulinum (strain 657 / Type Ba4).